Consider the following 1070-residue polypeptide: DNA-directed RNA polymerase subunit beta (1070 aa).

This sequence belongs to the RNA polymerase beta chain family. As to quaternary structure, in plastids the minimal PEP RNA polymerase catalytic core is composed of four subunits: alpha, beta, beta', and beta''. When a (nuclear-encoded) sigma factor is associated with the core the holoenzyme is formed, which can initiate transcription.

It localises to the plastid. The protein resides in the chloroplast. The catalysed reaction is RNA(n) + a ribonucleoside 5'-triphosphate = RNA(n+1) + diphosphate. DNA-dependent RNA polymerase catalyzes the transcription of DNA into RNA using the four ribonucleoside triphosphates as substrates. This chain is DNA-directed RNA polymerase subunit beta, found in Solanum bulbocastanum (Wild potato).